The primary structure comprises 110 residues: Quaternary ammonium compound-resistance protein QacF (110 aa).

The next 4 membrane-spanning stretches (helical) occupy residues 1–21 (MKNW…TSAL), 31–51 (VPSV…SLAL), 58–78 (IAYA…AWIF), and 85–105 (FWAF…NLLS).

Belongs to the drug/metabolite transporter (DMT) superfamily. Small multidrug resistance (SMR) (TC 2.A.7.1) family.

The protein localises to the cell membrane. Functionally, multidrug exporter. Is implicated for the resistance to bacteriocidal quaternary ammonium compounds. The chain is Quaternary ammonium compound-resistance protein QacF (qacF) from Klebsiella aerogenes (Enterobacter aerogenes).